We begin with the raw amino-acid sequence, 140 residues long: uncharacterized protein (140 aa).

This is an uncharacterized protein from Escherichia coli (strain K12).